Reading from the N-terminus, the 217-residue chain is Uracil phosphoribosyltransferase (217 aa).

5-phospho-alpha-D-ribose 1-diphosphate-binding positions include R84, R109, and 137-145 (DPMLATGGS). Uracil contacts are provided by residues I202 and 207–209 (GDA). 5-phospho-alpha-D-ribose 1-diphosphate is bound at residue D208.

This sequence belongs to the UPRTase family. Requires Mg(2+) as cofactor.

The enzyme catalyses UMP + diphosphate = 5-phospho-alpha-D-ribose 1-diphosphate + uracil. It participates in pyrimidine metabolism; UMP biosynthesis via salvage pathway; UMP from uracil: step 1/1. With respect to regulation, allosterically activated by GTP. Its function is as follows. Catalyzes the conversion of uracil and 5-phospho-alpha-D-ribose 1-diphosphate (PRPP) to UMP and diphosphate. This is Uracil phosphoribosyltransferase from Synechococcus elongatus (strain ATCC 33912 / PCC 7942 / FACHB-805) (Anacystis nidulans R2).